Consider the following 313-residue polypeptide: uncharacterized protein (313 aa).

29–61 (ALVTGGGTGLGKAIATTFAHLGASVAIAARRLD) contributes to the NADP(+) binding site.

The protein belongs to the short-chain dehydrogenases/reductases (SDR) family. 2,4-dienoyl-CoA reductase subfamily.

This is an uncharacterized protein from Caenorhabditis elegans.